An 833-amino-acid polypeptide reads, in one-letter code: Phosphatidylinositol-3-phosphatase myotubularin-2 (833 aa).

Positions 42 to 109 (GSYSNLDCLL…VAIEKFNKLA (68 aa)) constitute a GRAM domain. The Myotubularin phosphatase domain maps to 181–647 (TNPKERLLNE…LAPTLWPQFH (467 aa)). Residues 329 to 332 (NGAK), 354 to 355 (NI), 440 to 446 (CSDGWDR), and Arg486 each bind substrate. Catalysis depends on Cys440, which acts as the Phosphocysteine intermediate. The disordered stretch occupies residues 503-530 (QSSSARSFPSSPVRQSPGSAAAQSSSSS). The span at 504-530 (SSSARSFPSSPVRQSPGSAAAQSSSSS) shows a compositional bias: low complexity. Positions 660 to 717 (ETEDQCRAMTVKYSEMKKEKEEAERKVDELSSAMESLNEELLNERDISRAARESAKRA) form a coiled coil. The interval 753-772 (KCSHSIPQKQSEDNTTDVSE) is disordered.

Belongs to the protein-tyrosine phosphatase family. Non-receptor class myotubularin subfamily. In terms of tissue distribution, mostly expressed in flowers and roots, and, to a lower extent, in siliques and leaves.

Its subcellular location is the cytoplasm. It carries out the reaction a 1,2-diacyl-sn-glycero-3-phospho-(1D-myo-inositol-3-phosphate) + H2O = a 1,2-diacyl-sn-glycero-3-phospho-(1D-myo-inositol) + phosphate. It catalyses the reaction a 1,2-diacyl-sn-glycero-3-phospho-(1D-myo-inositol-3,5-bisphosphate) + H2O = a 1,2-diacyl-sn-glycero-3-phospho-(1D-myo-inositol-5-phosphate) + phosphate. Functionally, phosphatase with phosphoinositide 3'-phosphatase activity that can use phosphatidylinositol-3-phosphate (PtdIns3P) and phosphatidylinositol-3,5-diphosphate (PtdIns3,5P(2)) as substrates and produces phosphatidylinositol-5-phosphate (PtdIns5P); participates in pathway(s) that transfer gene regulatory signals to the nucleus. In Arabidopsis thaliana (Mouse-ear cress), this protein is Phosphatidylinositol-3-phosphatase myotubularin-2 (MTM2).